The following is a 440-amino-acid chain: Armadillo-like helical domain containing protein 1 (440 aa).

The polypeptide is Armadillo-like helical domain containing protein 1 (Homo sapiens (Human)).